A 294-amino-acid chain; its full sequence is Cytidine deaminase (294 aa).

CMP/dCMP-type deaminase domains follow at residues 48–168 and 186–294; these read DEDA…FGPK and VSGD…VLLG. 89–91 is a substrate binding site; it reads NME. Residue His-102 coordinates Zn(2+). The Proton donor role is filled by Glu-104. 2 residues coordinate Zn(2+): Cys-129 and Cys-132.

The protein belongs to the cytidine and deoxycytidylate deaminase family. In terms of assembly, homodimer. Zn(2+) serves as cofactor.

It catalyses the reaction cytidine + H2O + H(+) = uridine + NH4(+). The enzyme catalyses 2'-deoxycytidine + H2O + H(+) = 2'-deoxyuridine + NH4(+). This enzyme scavenges exogenous and endogenous cytidine and 2'-deoxycytidine for UMP synthesis. In Klebsiella pneumoniae (strain 342), this protein is Cytidine deaminase.